A 1690-amino-acid chain; its full sequence is DNA-directed RNA polymerase subunit beta' (1690 aa).

Residues C63, C65, C78, and C81 each coordinate Zn(2+). 3 residues coordinate Mg(2+): D753, D755, and D757. C1107, C1295, C1302, and C1305 together coordinate Zn(2+).

It belongs to the RNA polymerase beta' chain family. The RNAP catalytic core consists of 2 alpha, 1 beta, 1 beta' and 1 omega subunit. When a sigma factor is associated with the core the holoenzyme is formed, which can initiate transcription. Mg(2+) serves as cofactor. Zn(2+) is required as a cofactor.

It catalyses the reaction RNA(n) + a ribonucleoside 5'-triphosphate = RNA(n+1) + diphosphate. DNA-dependent RNA polymerase catalyzes the transcription of DNA into RNA using the four ribonucleoside triphosphates as substrates. This chain is DNA-directed RNA polymerase subunit beta', found in Thermotoga sp. (strain RQ2).